Reading from the N-terminus, the 79-residue chain is Cell division protein ZapB (79 aa).

Residues 3 to 79 adopt a coiled-coil conformation; it reads LEVFEKLEAK…QALLGRMEEV (77 aa). Residues 36–45 show a composition bias toward polar residues; that stretch reads SLTQEVQSAQ. Residues 36–63 form a disordered region; it reads SLTQEVQSAQHQREELERENNSLKEQQS. The segment covering 46–57 has biased composition (basic and acidic residues); the sequence is HQREELERENNS.

Belongs to the ZapB family. In terms of assembly, homodimer. The ends of the coiled-coil dimer bind to each other, forming polymers. Interacts with FtsZ.

It localises to the cytoplasm. In terms of biological role, non-essential, abundant cell division factor that is required for proper Z-ring formation. It is recruited early to the divisome by direct interaction with FtsZ, stimulating Z-ring assembly and thereby promoting cell division earlier in the cell cycle. Its recruitment to the Z-ring requires functional FtsA or ZipA. The polypeptide is Cell division protein ZapB (Salmonella agona (strain SL483)).